The sequence spans 397 residues: Methyltransferase/ribosomally synthesized type I borosin cyclic peptide precursor mroMa1 (397 aa).

Residues 1–246 (MALKKPGSLT…TTSTFYVPPR (246 aa)) are methyltransferase domain. Active-site residues include R70, Y74, and Y96. S-adenosyl-L-methionine contacts are provided by Y96, H98, V101, A128, Q170, G208, S239, and T240. Residues 247 to 365 (TPAPIDPKAV…GPIFVVMRQL (119 aa)) are clasp domain. The segment at 366 to 388 (PSAIASGQEPSQEEIARADDATA) is precursor leader. 2 positions are modified to N-methylisoleucine: I391 and I392. The residue at position 393 (Y393) is an N-methyltyrosine. Residue I394 is modified to N-methylisoleucine. An N-methylvaline modification is found at V395.

It in the N-terminal section; belongs to the precorrin methyltransferase family. In terms of assembly, homodimer. In terms of processing, mroMA automethylates at Ile-391, Ile-392, Tyr-393, Ile-394 and Val-395 before being processed by the a prolyloligopeptidase which likely forms a peptidyl ester upon removal of the follower propeptide, which then undergoes macrocyclization with the N-terminus of the modified core peptide. Peptide backbone alpha-N-methylations change the physicochemical properties of amide bonds to provide structural constraints and other favorable characteristics including biological membrane permeability to peptides.

It participates in secondary metabolite biosynthesis. Functionally, fusion protein of the methyltransferase mroM1 and a type I borosin core peptide; part of the gene cluster that mediates the biosynthesis of a type I borosin, a highly methylated cyclic peptide with potent biological activities. Type I borosins derive from the C-terminus of the fusion protein, and it is the same protein that methylates its own C-terminus using S-adenosyl methionine (SAM). The C-terminus is subsequently cleaved off and macrocyclized by a prolyloligopeptidase to give the final product. In Mycena rosella (Pink bonnet), this protein is Methyltransferase/ribosomally synthesized type I borosin cyclic peptide precursor mroMa1.